Consider the following 505-residue polypeptide: MSTHTARPLGPQLALAGTVGKRVDVLVIGLTSASDGPEIALGDGIVDESVLTGLLDTLVAVGASGKAEETTRIPAPDTLPVDSVLAVGLGSAEKLDAEQIRKSAGAAARSLSGVGTVATTLSVLDLGAAAEGFALGAYRFNEFKSAKSAPGPDAQPVSRVELLVSSPRAKESKETLARSAAIAEAVATAREFVNTPPSHLFPAEFADRAKALGTDAGLKVEVLDEKALEKNGYGGILGVGKGSSRLPRLVRLSYSAKKRNAPKVALVGKGITFDTGGISIKPAAGMENMTSDMGGAAAVVATVVLAAKLGLPVDVTATVPMAENMPSSTAQRPGDVLTQYGGTTVEVINTDAEGRLVLADAIVRACEDDPDYLIDTATLTGAQMVALGNRTPGVMGTDEFRDRVAAISQEIGENAWAMPMPAELRSDLDSKVADLANVTNHRWGGMLAAALYLKEFVADGVQWAHIDVAGPAYNSSGPWGYTGRGGTGVPVRTMISVIEDIAANG.

Mn(2+) is bound by residues Lys269 and Asp274. The active site involves Lys281. The Mn(2+) site is built by Asp292, Asp351, and Glu353. Arg355 is a catalytic residue.

It belongs to the peptidase M17 family. It depends on Mn(2+) as a cofactor.

The protein localises to the cytoplasm. The catalysed reaction is Release of an N-terminal amino acid, Xaa-|-Yaa-, in which Xaa is preferably Leu, but may be other amino acids including Pro although not Arg or Lys, and Yaa may be Pro. Amino acid amides and methyl esters are also readily hydrolyzed, but rates on arylamides are exceedingly low.. The enzyme catalyses Release of an N-terminal amino acid, preferentially leucine, but not glutamic or aspartic acids.. Its function is as follows. Presumably involved in the processing and regular turnover of intracellular proteins. Catalyzes the removal of unsubstituted N-terminal amino acids from various peptides. The sequence is that of Probable cytosol aminopeptidase from Rhodococcus jostii (strain RHA1).